The chain runs to 954 residues: Glycine dehydrogenase (decarboxylating) (954 aa).

Lys704 carries the N6-(pyridoxal phosphate)lysine modification.

The protein belongs to the GcvP family. The glycine cleavage system is composed of four proteins: P, T, L and H. It depends on pyridoxal 5'-phosphate as a cofactor.

The enzyme catalyses N(6)-[(R)-lipoyl]-L-lysyl-[glycine-cleavage complex H protein] + glycine + H(+) = N(6)-[(R)-S(8)-aminomethyldihydrolipoyl]-L-lysyl-[glycine-cleavage complex H protein] + CO2. In terms of biological role, the glycine cleavage system catalyzes the degradation of glycine. The P protein binds the alpha-amino group of glycine through its pyridoxal phosphate cofactor; CO(2) is released and the remaining methylamine moiety is then transferred to the lipoamide cofactor of the H protein. In Rhizobium johnstonii (strain DSM 114642 / LMG 32736 / 3841) (Rhizobium leguminosarum bv. viciae), this protein is Glycine dehydrogenase (decarboxylating).